We begin with the raw amino-acid sequence, 1826 residues long: MRPGCDLLLRAAATVTAAIMSDSDSEEDSSGGGPFTLAGILFGNISGAGQLEGESVLDDECKKHLAGLGALGLGSLITELTANEELTGTGGALVNDEGWIRSTEDAVDYSDINEVAEDESQRHQQTMGSLQPLYHSDYDEDDYDADCEDIDCKLMPPPPPPPGPMKKDKDQDAITCVSESGEDIILPSIIAPSFLASEKVDFSSYSDSESEMGPQEATQAESEDGKLTLPLAGIMQHDATKLLPSVTELFPEFRPGKVLRFLHLFGPGKNVPSVWRSARRKRKKHRELIQEEQIQEVECSVESEVSQKSLWNYDYAPPPPPEQCLADDEITMMVPVESKFSQSTGDVDKVTDTKPRVAEWRYGPARLWYDMLGVSEDGSGFDYGFKLRKTQHEPVIKSRMMEEFRKLEESNGTDLLADENFLMVTQLHWEDSIIWDGEDIKHKGTKPQGASLAGWLPSIKTRNVMAYNVQQGFAPTLDDDKPWYSIFPIDNEDLVYGRWEDNIIWDAQAMPRLLEPPVLALDPNDENLILEIPDEKEEATSNSPSKESKKESSLKKSRILLGKTGVIREEPQQNMSQPEVKDPWNLSNDEYYFPKQQGLRGTFGGNIIQHSIPAMELWQPFFPTHMGPIKIRQFHRPPLKKYSFGALSQPGPHSVQPLLKHIKKKAKMREQERQASGGGELFFMRTPQDLTGKDGDLILAEYSEENGPLMMQVGMATKIKNYYKRKPGKDPGAPDCKYGETVYCHTSPFLGSLHPGQLLQALENNLFRAPVYLHKMPETDFLIIRTRQGYYIRELVDIFVVGQQCPLFEVPGPNSRRANMHIRDFLQVFIYRLFWKSKDRPRRIRMEDIKKAFPSHSESSIRKRLKLCADFKRTGMDSNWWVLKSDFRLPTEEEIRAKVSPEQCCAYYSMIAAKQRLKDAGYGEKSFFAPEEENEEDFQMKIDDEVHAAPWNTTRAFIAAMKGKCLLEVTGVADPTGCGEGFSYVKIPNKPTQQKDDKEPQAVKKTVTGTDADLRRLSLKNAKQLLRKFGVPEEEIKKLSRWEVIDVVRTMSTEQAHSGEGPMSKFARGSRFSVAEHQERYKEECQRIFDLQNKVLSSTEVLSTDTDSISAEDSDFEEMGKNIENMLQNKKTSSQLSREWEEQERKELRRMLLVAGSAASGNNHRDDVTASMTSLKSSATGHCLKIYRTFRDEEGKEYVRCETVRKPAVIDAYVRIRTTKDEKFIQKFALFDEKHREEMRKERRRIQEQLRRLKRNQEKEKLKGPPEKKPKKMKERPDLKLKCGACGAIGHMRTNKFCPLYYQTNVPPSKPVAMTEEQEEELEKTVIHNDNEELIKVEGTKIVFGKQLIENVHEVRRKSLVLKFPKQQLPPKKKRRVGTTVHCDYLNIPHKSIHRRRTDPMVTLSSILESIINDMRDLPNTHPFHTPVNAKVVKDYYKIITRPMDLQTLRENVRKCLYPSREEFREHLELIVKNSATYNGPKHSLTQISQSMLDLCDEKLKEKEDKLARLEKAINPLLDDDDQVAFSFILDNIVTQKMMAVPDSWPFHHPVNKKFVPDYYKMIVNPVDLETIRKNISKHKYQSRESFLDDVNLILANSVKYNGPESQYTKTAQEIVNICYQTITEYDEHLTQLEKDICTAKEAALEEAELESLDPMTPGPYTSQPPDMYDTNTSLSTSRDASVFQDESNLSVLDISTATPEKQMCQGQGRLGEEDSDVDVEGYDDEEEDGKPKPPAPEGGDGDLADEEEGTVQQPEASVLYEDLLISEGEDDEEDAGSDEEGDNPFSAIQLSESGSDSDVGYGGIRPKQPFMLQHASGEHKDGHGK.

Disordered stretches follow at residues 118-141 (DESQ…YDED), 532-555 (IPDE…SSLK), and 1252-1276 (RLKR…MKER). The span at 1252-1268 (RLKRNQEKEKLKGPPEK) shows a compositional bias: basic and acidic residues. The Nuclear localization signal motif lies at 1370–1377 (PPKKKRRV). Bromo domains follow at residues 1395-1503 (RRRT…LKEK) and 1517-1626 (LLDD…ITEY). A disordered region spans residues 1648–1826 (AELESLDPMT…SGEHKDGHGK (179 aa)). Positions 1660–1700 (PYTSQPPDMYDTNTSLSTSRDASVFQDESNLSVLDISTATP) are enriched in polar residues. 3 stretches are compositionally biased toward acidic residues: residues 1714–1729 (EDSD…EEED), 1740–1750 (GDGDLADEEEG), and 1768–1783 (EGED…EEGD). The segment covering 1787–1797 (SAIQLSESGSD) has biased composition (polar residues). The span at 1817–1826 (SGEHKDGHGK) shows a compositional bias: basic and acidic residues.

The protein belongs to the TAF1 family. In terms of assembly, can bind directly to TATA-box binding protein (TBP). Interacts (via bromo domains) with acetylated lysine residues on the N-terminus of histone H1.4, H2A, H2B, H3 and H4 (in vitro). As to expression, testis specific, expressed apparently in germ cells.

It localises to the nucleus. Its function is as follows. May act as a functional substitute for TAF1/TAFII250 during male meiosis, when sex chromosomes are transcriptionally silenced. The protein is Transcription initiation factor TFIID subunit 1-like (TAF1L) of Homo sapiens (Human).